A 967-amino-acid polypeptide reads, in one-letter code: Aminopeptidase N (967 aa).

Residues Met-1–Ser-8 lie on the Cytoplasmic side of the membrane. The chain crosses the membrane as a helical; Signal-anchor for type II membrane protein span at residues Lys-9–Val-32. The segment at Tyr-33–Ser-66 is cytosolic Ser/Thr-rich junction. At Tyr-33–Ser-967 the chain is on the extracellular side. Asn-38 carries an N-linked (GlcNAc...) asparagine glycan. Residues Thr-41–Thr-61 are disordered. Residues Lys-67–Ser-967 are metalloprotease. 2 N-linked (GlcNAc...) asparagine glycosylation sites follow: Asn-84 and Asn-126. Residue Tyr-175 is modified to Sulfotyrosine. N-linked (GlcNAc...) asparagine glycans are attached at residues Asn-233 and Asn-338. Gly-351 to Asn-355 provides a ligand contact to substrate. His-387 provides a ligand contact to Zn(2+). Glu-388 serves as the catalytic Proton acceptor. Zn(2+)-binding residues include His-391 and Glu-410. The residue at position 418 (Tyr-418) is a Sulfotyrosine. Asn-626, Asn-682, and Asn-740 each carry an N-linked (GlcNAc...) asparagine glycan. Residues Ala-670–Trp-840 form an interaction with FCoV and TGEV spike glycoprotein region. 2 disulfides stabilise this stretch: Cys-762/Cys-769 and Cys-799/Cys-835.

Belongs to the peptidase M1 family. As to quaternary structure, homodimer. Interacts with SLC6A19. In terms of assembly, (Microbial infection) Interacts with FCoV, CCoV, TGEV and HCoV-229E spike glycoprotein. Zn(2+) serves as cofactor. In terms of processing, sulfated. N- and O-glycosylated. Post-translationally, may undergo proteolysis and give rise to a soluble form.

Its subcellular location is the cell membrane. The enzyme catalyses Release of an N-terminal amino acid, Xaa-|-Yaa- from a peptide, amide or arylamide. Xaa is preferably Ala, but may be most amino acids including Pro (slow action). When a terminal hydrophobic residue is followed by a prolyl residue, the two may be released as an intact Xaa-Pro dipeptide.. In terms of biological role, broad specificity aminopeptidase which plays a role in the final digestion of peptides generated from hydrolysis of proteins by gastric and pancreatic proteases. Also involved in the processing of various peptides including peptide hormones, such as angiotensin III and IV, neuropeptides, and chemokines. May also be involved the cleavage of peptides bound to major histocompatibility complex class II molecules of antigen presenting cells. May have a role in angiogenesis and promote cholesterol crystallization. May have a role in amino acid transport by acting as binding partner of amino acid transporter SLC6A19 and regulating its activity. (Microbial infection) In case of feline coronavirus (FCoV) infection, serves as a receptor for FCoV spike glycoprotein. It is as well a receptor for other serogroup I coronaviruses, like canine coronavirus (CCoV), porcine transmissible gastroenteritis virus (TGEV), and human coronavirus 229E (HCoV-229E). Also serves as a receptor for infectious bronchitis virus (IBV, Arkansas 99 serotype) in serogroup III. The chain is Aminopeptidase N (ANPEP) from Felis catus (Cat).